Consider the following 257-residue polypeptide: Probable S-adenosylmethionine-dependent methyltransferase MSMEG_2350/MSMEI_2290 (257 aa).

The protein belongs to the methyltransferase superfamily.

In terms of biological role, probable S-adenosylmethionine-dependent methyltransferase required for the 6-O-methylation of the polysaccharide backbone of 6-O-methylglucosyl lipopolysaccharides (MGLP). In Mycolicibacterium smegmatis (strain ATCC 700084 / mc(2)155) (Mycobacterium smegmatis), this protein is Probable S-adenosylmethionine-dependent methyltransferase MSMEG_2350/MSMEI_2290.